The following is a 373-amino-acid chain: Cyclin-A3-1 (373 aa).

The interval 50–80 is disordered; sequence AVVLKPQPAPRGGKRAASHAAEPKKPAPPPA.

The protein belongs to the cyclin family. Cyclin AB subfamily.

This chain is Cyclin-A3-1 (CYCA3-1), found in Oryza sativa subsp. japonica (Rice).